A 209-amino-acid chain; its full sequence is B3 domain-containing protein At2g31420 (209 aa).

A DNA-binding region (TF-B3) is located at residues 101–198; sequence LSKLEKSDFL…KLCFALSSPT (98 aa).

It is found in the nucleus. The protein is B3 domain-containing protein At2g31420 of Arabidopsis thaliana (Mouse-ear cress).